Reading from the N-terminus, the 1476-residue chain is ABC-type transporter FG02316 (1476 aa).

Asparagine 2 carries an N-linked (GlcNAc...) asparagine glycan. The next 10 membrane-spanning stretches (helical) occupy residues 23 to 43 (FTLLFEESILVVPITALLLLA), 64 to 84 (WLYCKIILCLLLLASQIAFLV), 97 to 117 (SLPAAALSIVASITLLGLSYV), 156 to 176 (AAITALISTVVKILMLSAETI), 266 to 286 (ILFIIFPRLCFIGFTFCQPFL), 305 to 325 (QGYGLIGAWFLVFIGLAVTTG), 384 to 404 (VWANLIEIVIAVYLLGRQLGL), 407 to 427 (LIPVGAAIFSIVGSVIAVSFV), 485 to 505 (LLIWNMVLAYLAPIFAPVLSF), and 532 to 552 (LFALLQEPLASFVTSLSSFMG). Residues 274-552 (LCFIGFTFCQ…FVTSLSSFMG (279 aa)) enclose the ABC transmembrane type-1 1 domain. A disordered region spans residues 586–615 (ISGVSSSEEKHPVSPIQESMMKTEPSGDSP). In terms of domain architecture, ABC transporter 1 spans 622-847 (IRNASFGYDR…SDNYVSHSDV (226 aa)). An N-linked (GlcNAc...) asparagine glycan is attached at asparagine 624. 654–661 (GPVGSGKS) is a binding site for ATP. Asparagine 682, asparagine 696, asparagine 798, and asparagine 836 each carry an N-linked (GlcNAc...) asparagine glycan. Positions 842 to 870 (VSHSDVSSPDGARSKAPSSGPASSSAPVP) are disordered. A compositionally biased stretch (low complexity) spans 855 to 870 (SKAPSSGPASSSAPVP). The next 6 membrane-spanning stretches (helical) occupy residues 906-926 (MNAIGWIPTMVFVLAICAYIF), 950-970 (LGYYLGVYAMLGALSIIFLVL), 1021-1041 (LIDMDLPLSALNTFATFVLCI), 1045-1065 (ILIAVGSYYTAIAFPFLLATL), 1137-1157 (WLTLVLDMIVTIIAVLVVVLV), and 1167-1187 (GLIGVALVNIIQFSQHLKLLM). Residues 916 to 1195 (VFVLAICAYI…LMTFWTTLET (280 aa)) enclose the ABC transmembrane type-1 2 domain. An ABC transporter 2 domain is found at 1232-1464 (ILFDQVSAGY…GPDASTFASM (233 aa)). N-linked (GlcNAc...) asparagine glycosylation is present at asparagine 1250. ATP is bound at residue 1265-1272 (GRTGSGKS). Asparagine 1414 is a glycosylation site (N-linked (GlcNAc...) asparagine).

This sequence belongs to the ABC transporter superfamily. ABCC family. Conjugate transporter (TC 3.A.1.208) subfamily.

It is found in the cell membrane. Functionally, ABC-type transporter; part of the gene cluster that mediates the biosynthesis of the fusahexin, a cyclic hydrophobic hexapeptide with the amino acid sequence cyclo-(D-Ala-L-Leu-D-allo-Thr-L-Pro-D-Leu-L-Leu) that plays an important role in cell surface hydrophobicity. This chain is ABC-type transporter FG02316, found in Gibberella zeae (strain ATCC MYA-4620 / CBS 123657 / FGSC 9075 / NRRL 31084 / PH-1) (Wheat head blight fungus).